The following is a 501-amino-acid chain: Ribose import ATP-binding protein RbsA 1 (501 aa).

ABC transporter domains follow at residues 5 to 241 (LQLK…VGRK) and 252 to 495 (APGD…VGKL). 37–44 (GENGAGKS) contacts ATP.

This sequence belongs to the ABC transporter superfamily. Ribose importer (TC 3.A.1.2.1) family. In terms of assembly, the complex is composed of an ATP-binding protein (RbsA), two transmembrane proteins (RbsC) and a solute-binding protein (RbsB).

The protein localises to the cell inner membrane. It catalyses the reaction D-ribose(out) + ATP + H2O = D-ribose(in) + ADP + phosphate + H(+). In terms of biological role, part of the ABC transporter complex RbsABC involved in ribose import. Responsible for energy coupling to the transport system. This Escherichia coli O157:H7 protein is Ribose import ATP-binding protein RbsA 1.